Here is a 272-residue protein sequence, read N- to C-terminus: MTGSIWAGSIWAIVPAAGRGTRFGGPLPKQYLQAGGQPLMAYTLMALAAHPALAGIVVAIAPDDADWPGWTAVQSKPVLTCLGGATRAASVLAGVLALPESVRADDFVLVHDAARPNLALADLDRLLEIGRGDPVGAILAAPVRDTLKRAGDDGGIDGTEPRERLWRALTPQLFRRHQLIRGLTEASAAGVDVTDEAMAMERMGLRPLLVEGAEDNFKVTTPADLARFEFELARRGIAVDADALEAPAVNAQSNARNVATQLATVSHGNDAT.

It belongs to the IspD/TarI cytidylyltransferase family. IspD subfamily.

It catalyses the reaction 2-C-methyl-D-erythritol 4-phosphate + CTP + H(+) = 4-CDP-2-C-methyl-D-erythritol + diphosphate. The protein operates within isoprenoid biosynthesis; isopentenyl diphosphate biosynthesis via DXP pathway; isopentenyl diphosphate from 1-deoxy-D-xylulose 5-phosphate: step 2/6. In terms of biological role, catalyzes the formation of 4-diphosphocytidyl-2-C-methyl-D-erythritol from CTP and 2-C-methyl-D-erythritol 4-phosphate (MEP). In Xanthomonas oryzae pv. oryzae (strain MAFF 311018), this protein is 2-C-methyl-D-erythritol 4-phosphate cytidylyltransferase.